We begin with the raw amino-acid sequence, 239 residues long: 1-(5-phosphoribosyl)-5-[(5-phosphoribosylamino)methylideneamino] imidazole-4-carboxamide isomerase (239 aa).

Catalysis depends on Asp8, which acts as the Proton acceptor. The Proton donor role is filled by Asp129.

It belongs to the HisA/HisF family.

Its subcellular location is the cytoplasm. It carries out the reaction 1-(5-phospho-beta-D-ribosyl)-5-[(5-phospho-beta-D-ribosylamino)methylideneamino]imidazole-4-carboxamide = 5-[(5-phospho-1-deoxy-D-ribulos-1-ylimino)methylamino]-1-(5-phospho-beta-D-ribosyl)imidazole-4-carboxamide. It functions in the pathway amino-acid biosynthesis; L-histidine biosynthesis; L-histidine from 5-phospho-alpha-D-ribose 1-diphosphate: step 4/9. This chain is 1-(5-phosphoribosyl)-5-[(5-phosphoribosylamino)methylideneamino] imidazole-4-carboxamide isomerase, found in Legionella pneumophila (strain Lens).